The sequence spans 144 residues: Superoxide dismutase [Mn], mitochondrial (144 aa).

Histidine 10, histidine 58, and aspartate 143 together coordinate Mn(2+).

It belongs to the iron/manganese superoxide dismutase family. Homotetramer. Mn(2+) is required as a cofactor.

The protein resides in the mitochondrion matrix. The enzyme catalyses 2 superoxide + 2 H(+) = H2O2 + O2. In terms of biological role, destroys superoxide anion radicals which are normally produced within the cells and which are toxic to biological systems. The polypeptide is Superoxide dismutase [Mn], mitochondrial (Eptatretus stoutii (Pacific hagfish)).